A 158-amino-acid chain; its full sequence is Small ribosomal subunit protein uS7c (158 aa).

Belongs to the universal ribosomal protein uS7 family. As to quaternary structure, part of the 30S ribosomal subunit.

The protein localises to the plastid. It localises to the chloroplast. In terms of biological role, one of the primary rRNA binding proteins, it binds directly to 16S rRNA where it nucleates assembly of the head domain of the 30S subunit. The polypeptide is Small ribosomal subunit protein uS7c (rps7) (Trieres chinensis (Marine centric diatom)).